Consider the following 349-residue polypeptide: Phosphoribosylformylglycinamidine cyclo-ligase (349 aa).

This sequence belongs to the AIR synthase family.

The protein localises to the cytoplasm. The catalysed reaction is 2-formamido-N(1)-(5-O-phospho-beta-D-ribosyl)acetamidine + ATP = 5-amino-1-(5-phospho-beta-D-ribosyl)imidazole + ADP + phosphate + H(+). It participates in purine metabolism; IMP biosynthesis via de novo pathway; 5-amino-1-(5-phospho-D-ribosyl)imidazole from N(2)-formyl-N(1)-(5-phospho-D-ribosyl)glycinamide: step 2/2. This chain is Phosphoribosylformylglycinamidine cyclo-ligase, found in Methanococcus vannielii (strain ATCC 35089 / DSM 1224 / JCM 13029 / OCM 148 / SB).